The primary structure comprises 339 residues: mRNA cap guanine-N(7) methyltransferase 2 (339 aa).

Residues 1-277 (MAVTPHHRLY…LYSTFVFQKP (277 aa)) form the mRNA cap 0 methyltransferase domain. S-adenosyl-L-methionine contacts are provided by residues lysine 14, aspartate 54, and 82-83 (DP). A disordered region spans residues 314 to 339 (VSRTDILPPADNEKGILGPGPADMRL).

The protein belongs to the class I-like SAM-binding methyltransferase superfamily. mRNA cap 0 methyltransferase family.

The protein resides in the nucleus. It carries out the reaction a 5'-end (5'-triphosphoguanosine)-ribonucleoside in mRNA + S-adenosyl-L-methionine = a 5'-end (N(7)-methyl 5'-triphosphoguanosine)-ribonucleoside in mRNA + S-adenosyl-L-homocysteine. Its function is as follows. mRNA-capping methyltransferase that methylates the N7 position of the added guanosine to the 5'-cap structure of mRNAs. Binds RNA containing 5'-terminal GpppC. In Oryza sativa subsp. japonica (Rice), this protein is mRNA cap guanine-N(7) methyltransferase 2.